The following is a 623-amino-acid chain: DEAD-box ATP-dependent RNA helicase 52C (623 aa).

The disordered stretch occupies residues 1 to 120; sequence MATPSRTSWA…DGDAAAGAGD (120 aa). Positions 10–29 are enriched in low complexity; the sequence is ADVADADPAPAPAPAANGPA. Pro residues predominate over residues 54 to 69; sequence APPPSSSSSSAPPPRA. Residues 70–83 show a composition bias toward low complexity; the sequence is APGLLAPRPAAAGM. Gly residues predominate over residues 84 to 97; the sequence is GRMGGGGGGGGFGG. The Q motif signature appears at 155–183; that stretch reads GTFAEIDLGQALNDNIRRCKYVRPTPVQR. In terms of domain architecture, Helicase ATP-binding spans 186–372; sequence IPISLAGRDL…SDFLENYIFL (187 aa). 199-206 is a binding site for ATP; sequence AQTGSGKT. Positions 316-319 match the DEAD box motif; that stretch reads DEAD. Positions 399–550 constitute a Helicase C-terminal domain; sequence HLMDLLHAQR…EVPAWLSRYA (152 aa). The segment at 553–595 is disordered; the sequence is PSYGGGGGRNRRSGGGSRFGGRDFRRDSSSGRGGGDYYGGGSS. The segment covering 555–571 has biased composition (gly residues); the sequence is YGGGGGRNRRSGGGSRF. The segment covering 572–581 has biased composition (basic and acidic residues); the sequence is GGRDFRRDSS. Over residues 583-595 the composition is skewed to gly residues; sequence GRGGGDYYGGGSS.

It belongs to the DEAD box helicase family. DDX3/DED1 subfamily.

It catalyses the reaction ATP + H2O = ADP + phosphate + H(+). The sequence is that of DEAD-box ATP-dependent RNA helicase 52C from Oryza sativa subsp. japonica (Rice).